Reading from the N-terminus, the 258-residue chain is 14-3-3-like protein 16R (258 aa).

Residues aspartate 238–glutamate 258 are disordered. Residues aspartate 245–glutamate 258 show a composition bias toward basic and acidic residues.

This sequence belongs to the 14-3-3 family.

In Solanum tuberosum (Potato), this protein is 14-3-3-like protein 16R.